The sequence spans 562 residues: Probable sesquiterpene synthase (562 aa).

Residues aspartate 315, aspartate 319, and glutamate 467 each contribute to the Mg(2+) site. The short motif at 315-319 (DDIYD) is the DDXXD motif element.

It belongs to the terpene synthase family. Tpsa subfamily. The cofactor is Mg(2+). Requires Mn(2+) as cofactor.

Its function is as follows. Sesquiterpene synthase. The polypeptide is Probable sesquiterpene synthase (STPS) (Santalum murrayanum (Bitter quandong)).